A 117-amino-acid polypeptide reads, in one-letter code: NADH-ubiquinone oxidoreductase chain 3 (117 aa).

3 helical membrane-spanning segments follow: residues 4–24 (IILI…LASI), 60–80 (ITII…MIII), and 86–106 (IMIW…GLYH).

The protein belongs to the complex I subunit 3 family.

The protein localises to the mitochondrion membrane. The catalysed reaction is a ubiquinone + NADH + 5 H(+)(in) = a ubiquinol + NAD(+) + 4 H(+)(out). Functionally, core subunit of the mitochondrial membrane respiratory chain NADH dehydrogenase (Complex I) that is believed to belong to the minimal assembly required for catalysis. Complex I functions in the transfer of electrons from NADH to the respiratory chain. The immediate electron acceptor for the enzyme is believed to be ubiquinone. The sequence is that of NADH-ubiquinone oxidoreductase chain 3 (mt:ND3) from Drosophila subobscura (Fruit fly).